Consider the following 491-residue polypeptide: 3-octaprenyl-4-hydroxybenzoate carboxy-lyase (491 aa).

N172 contributes to the Mn(2+) binding site. Residues 175–177 (IYR), 189–191 (RWL), and 194–195 (RG) each bind prenylated FMN. Position 238 (E238) interacts with Mn(2+). Catalysis depends on D287, which acts as the Proton donor.

The protein belongs to the UbiD family. Homohexamer. It depends on prenylated FMN as a cofactor. Mn(2+) serves as cofactor.

The protein localises to the cell membrane. The catalysed reaction is a 4-hydroxy-3-(all-trans-polyprenyl)benzoate + H(+) = a 2-(all-trans-polyprenyl)phenol + CO2. It functions in the pathway cofactor biosynthesis; ubiquinone biosynthesis. Functionally, catalyzes the decarboxylation of 3-octaprenyl-4-hydroxy benzoate to 2-octaprenylphenol, an intermediate step in ubiquinone biosynthesis. This is 3-octaprenyl-4-hydroxybenzoate carboxy-lyase from Histophilus somni (strain 2336) (Haemophilus somnus).